The chain runs to 301 residues: Putative MgpC-like protein MPN_093 (301 aa).

Belongs to the MgpC family.

In Mycoplasma pneumoniae (strain ATCC 29342 / M129 / Subtype 1) (Mycoplasmoides pneumoniae), this protein is Putative MgpC-like protein MPN_093.